A 468-amino-acid chain; its full sequence is Beta-amylase (468 aa).

The first 36 residues, 1-36, serve as a signal peptide directing secretion; the sequence is MTLYRSLWKKGCMLLLSLVLSLTAFIGSPSNTASAA. Asp-76 provides a ligand contact to substrate. The Ca(2+) site is built by Glu-83 and Asp-87. Substrate is bound by residues His-116 and Asp-124. Cys-118 and Cys-126 are oxidised to a cystine. Residue Glu-170 participates in Ca(2+) binding. Glu-198 acts as the Proton donor in catalysis. Substrate-binding residues include Lys-314, His-319, and Thr-357. Glu-394 acts as the Proton acceptor in catalysis. Substrate-binding positions include 395-396 and Arg-423; that span reads NA.

Belongs to the glycosyl hydrolase 14 family. Ca(2+) is required as a cofactor.

It carries out the reaction Hydrolysis of (1-&gt;4)-alpha-D-glucosidic linkages in polysaccharides so as to remove successive maltose units from the non-reducing ends of the chains.. The sequence is that of Beta-amylase from Cytobacillus firmus (Bacillus firmus).